The sequence spans 382 residues: Inactive anthranilate O-methyltransferase 1 (382 aa).

S-adenosyl-L-homocysteine contacts are provided by Tyr-20, Cys-61, Asn-66, Asp-102, Leu-103, Ser-146, and Tyr-147. Mg(2+) is bound by residues Glu-268 and Phe-270.

The protein belongs to the methyltransferase superfamily. Type-7 methyltransferase family. SABATH subfamily.

The polypeptide is Inactive anthranilate O-methyltransferase 1 (AAMT1I) (Zea mays (Maize)).